The following is a 298-amino-acid chain: MSAQRLRIAIQKKGRLSKECQELFKRCGMKFNISGERLVVHSENMPIDLLLVRDDDIPSLIMDGVVDLGVIGENELEEVRLERKALGEPSAFTTLRRLDFGGCRLSIAIDKDAVYNGPQDLAGKRIATTYSQLLKSFMDEKNIPFSTCILNGSVEVAPRAGLSDAIADLVSTGATLEANGLKEAEVIFRSKATLIQREGEFDADKAALIDKLLTRMQGCIQAKESKYIMLHAPTDKLEAIKSLLPGAEDPTVLPLSSDGAKVAVHLVSTENLFWETMEQLKALGASSILVLPIEKMME.

This sequence belongs to the ATP phosphoribosyltransferase family. Long subfamily. It depends on Mg(2+) as a cofactor.

Its subcellular location is the cytoplasm. The catalysed reaction is 1-(5-phospho-beta-D-ribosyl)-ATP + diphosphate = 5-phospho-alpha-D-ribose 1-diphosphate + ATP. It functions in the pathway amino-acid biosynthesis; L-histidine biosynthesis; L-histidine from 5-phospho-alpha-D-ribose 1-diphosphate: step 1/9. With respect to regulation, feedback inhibited by histidine. Functionally, catalyzes the condensation of ATP and 5-phosphoribose 1-diphosphate to form N'-(5'-phosphoribosyl)-ATP (PR-ATP). Has a crucial role in the pathway because the rate of histidine biosynthesis seems to be controlled primarily by regulation of HisG enzymatic activity. This Aliivibrio salmonicida (strain LFI1238) (Vibrio salmonicida (strain LFI1238)) protein is ATP phosphoribosyltransferase.